The sequence spans 320 residues: Heterogeneous nuclear ribonucleoprotein A1 (320 aa).

Met-1 is modified (N-acetylmethionine). An N-acetylserine; in Heterogeneous nuclear ribonucleoprotein A1, N-terminally processed modification is found at Ser-2. Phosphoserine is present on Ser-2. Lys-3 carries the post-translational modification N6-acetyllysine; alternate. A Glycyl lysine isopeptide (Lys-Gly) (interchain with G-Cter in SUMO2); alternate cross-link involves residue Lys-3. Phosphoserine occurs at positions 4 and 6. Residues 4-94 are globular A domain; sequence SESPKEPEQL…EPKRAVSRED (91 aa). Lys-8 participates in a covalent cross-link: Glycyl lysine isopeptide (Lys-Gly) (interchain with G-Cter in SUMO2). 2 consecutive RRM domains span residues 14–97 and 105–184; these read RKLF…DSQR and KKIF…LSKQ. Position 22 is a phosphoserine (Ser-22). Residue Lys-78 forms a Glycyl lysine isopeptide (Lys-Gly) (interchain with G-Cter in SUMO2) linkage. Positions 95-185 are globular B domain; the sequence is SQRPGAHLTV…EVRKALSKQE (91 aa). Residue Lys-113 forms a Glycyl lysine isopeptide (Lys-Gly) (interchain with G-Cter in SUMO) linkage. Glycyl lysine isopeptide (Lys-Gly) (interchain with G-Cter in SUMO2) cross-links involve residues Lys-179 and Lys-183. The disordered stretch occupies residues 182–216; that stretch reads SKQEMASASSSQRGRSGSGNFGGGRGGGFGGNDNF. Phosphoserine; by MKNK2 is present on Ser-192. Arg-194 carries the asymmetric dimethylarginine; alternate modification. Arg-194 carries the post-translational modification Dimethylated arginine; alternate. Arg-194 is modified (omega-N-methylarginine; alternate). A compositionally biased stretch (gly residues) spans 197-216; that stretch reads SGSGNFGGGRGGGFGGNDNF. Ser-199 carries the phosphoserine modification. 4 positions are modified to asymmetric dimethylarginine; alternate: Arg-206, Arg-218, Arg-225, and Arg-232. Position 206 is a dimethylated arginine; alternate (Arg-206). Omega-N-methylarginine; alternate occurs at positions 206, 218, 225, and 232. An RNA-binding RGG-box region spans residues 218 to 240; it reads RGGNFSGRGGFGGSRGGGGYGGS. Dimethylated arginine; alternate is present on Arg-225. A nuclear targeting sequence region spans residues 268–305; the sequence is NQSSNFGPMKGGNFGGRSLGPYGGGGQYFAKPRNQGGY. Gly residues predominate over residues 277 to 294; the sequence is KGGNFGGRSLGPYGGGGQ. The disordered stretch occupies residues 277–320; that stretch reads KGGNFGGRSLGPYGGGGQYFAKPRNQGGYGGSSSSSSYGSGRRF. Arg-284 is modified (omega-N-methylarginine). Ser-285 bears the Phosphoserine mark. An N6-acetyllysine; alternate modification is found at Lys-298. Lys-298 participates in a covalent cross-link: Glycyl lysine isopeptide (Lys-Gly) (interchain with G-Cter in SUMO2); alternate. Residue Arg-300 is modified to Omega-N-methylarginine. Residues 308–320 are compositionally biased toward low complexity; sequence SSSSSSYGSGRRF. Position 309 is a phosphoserine (Ser-309). Phosphoserine; by MKNK2 is present on residues Ser-310, Ser-311, and Ser-312. Phosphoserine is present on residues Ser-313 and Ser-316. Arg-318 is modified (omega-N-methylarginine).

In terms of assembly, identified in the spliceosome C complex. Identified in a IGF2BP1-dependent mRNP granule complex containing untranslated mRNAs. Interacts with SEPT6, C9orf72, KHDRBS1, UBQLN2. Interacts with PPIA/CYPA. Sumoylated.

Its subcellular location is the nucleus. The protein localises to the cytoplasm. Functionally, involved in the packaging of pre-mRNA into hnRNP particles, transport of poly(A) mRNA from the nucleus to the cytoplasm and modulation of splice site selection. Plays a role in the splicing of pyruvate kinase PKM by binding repressively to sequences flanking PKM exon 9, inhibiting exon 9 inclusion and resulting in exon 10 inclusion and production of the PKM M2 isoform. Binds to the IRES and thereby inhibits the translation of the apoptosis protease activating factor APAF1. May bind to specific miRNA hairpins. This chain is Heterogeneous nuclear ribonucleoprotein A1 (HNRNPA1), found in Macaca mulatta (Rhesus macaque).